Here is a 322-residue protein sequence, read N- to C-terminus: Beta-ketoacyl-[acyl-carrier-protein] synthase III (322 aa).

Active-site residues include Cys-113 and His-249. The interval 250-254 (QANLR) is ACP-binding. Asn-279 is an active-site residue.

Belongs to the thiolase-like superfamily. FabH family. As to quaternary structure, homodimer.

It is found in the cytoplasm. It carries out the reaction malonyl-[ACP] + acetyl-CoA + H(+) = 3-oxobutanoyl-[ACP] + CO2 + CoA. The protein operates within lipid metabolism; fatty acid biosynthesis. Catalyzes the condensation reaction of fatty acid synthesis by the addition to an acyl acceptor of two carbons from malonyl-ACP. Catalyzes the first condensation reaction which initiates fatty acid synthesis and may therefore play a role in governing the total rate of fatty acid production. Possesses both acetoacetyl-ACP synthase and acetyl transacylase activities. Its substrate specificity determines the biosynthesis of branched-chain and/or straight-chain of fatty acids. This is Beta-ketoacyl-[acyl-carrier-protein] synthase III from Granulibacter bethesdensis (strain ATCC BAA-1260 / CGDNIH1).